Here is a 354-residue protein sequence, read N- to C-terminus: 4-hydroxy-3-methylbut-2-en-1-yl diphosphate synthase (flavodoxin) (354 aa).

[4Fe-4S] cluster contacts are provided by C265, C268, C300, and E307.

It belongs to the IspG family. The cofactor is [4Fe-4S] cluster.

The catalysed reaction is (2E)-4-hydroxy-3-methylbut-2-enyl diphosphate + oxidized [flavodoxin] + H2O + 2 H(+) = 2-C-methyl-D-erythritol 2,4-cyclic diphosphate + reduced [flavodoxin]. It functions in the pathway isoprenoid biosynthesis; isopentenyl diphosphate biosynthesis via DXP pathway; isopentenyl diphosphate from 1-deoxy-D-xylulose 5-phosphate: step 5/6. In terms of biological role, converts 2C-methyl-D-erythritol 2,4-cyclodiphosphate (ME-2,4cPP) into 1-hydroxy-2-methyl-2-(E)-butenyl 4-diphosphate. The chain is 4-hydroxy-3-methylbut-2-en-1-yl diphosphate synthase (flavodoxin) from Hydrogenobaculum sp. (strain Y04AAS1).